Consider the following 210-residue polypeptide: NAD(P)H-quinone oxidoreductase subunit I (210 aa).

4Fe-4S ferredoxin-type domains follow at residues 54–83 (GRIH…VDWV) and 94–123 (YSYS…VTED). Residues Cys63, Cys66, Cys69, Cys73, Cys103, Cys106, Cys109, and Cys113 each contribute to the [4Fe-4S] cluster site.

The protein belongs to the complex I 23 kDa subunit family. As to quaternary structure, NDH-1 is composed of at least 11 different subunits. Requires [4Fe-4S] cluster as cofactor.

Its subcellular location is the cellular thylakoid membrane. It catalyses the reaction a plastoquinone + NADH + (n+1) H(+)(in) = a plastoquinol + NAD(+) + n H(+)(out). It carries out the reaction a plastoquinone + NADPH + (n+1) H(+)(in) = a plastoquinol + NADP(+) + n H(+)(out). Functionally, NDH-1 shuttles electrons from an unknown electron donor, via FMN and iron-sulfur (Fe-S) centers, to quinones in the respiratory and/or the photosynthetic chain. The immediate electron acceptor for the enzyme in this species is believed to be plastoquinone. Couples the redox reaction to proton translocation, and thus conserves the redox energy in a proton gradient. This chain is NAD(P)H-quinone oxidoreductase subunit I, found in Synechococcus sp. (strain JA-3-3Ab) (Cyanobacteria bacterium Yellowstone A-Prime).